A 391-amino-acid polypeptide reads, in one-letter code: Oocyte zinc finger protein XlCOF7.2 (391 aa).

C2H2-type zinc fingers lie at residues 284–306, 312–334, 340–362, and 368–391; these read FPCS…YRTH, YPCS…RRIH, SSCS…HRTH, and YSCS…RRTH.

The protein belongs to the krueppel C2H2-type zinc-finger protein family.

The protein resides in the nucleus. Functionally, may be involved in transcriptional regulation. This chain is Oocyte zinc finger protein XlCOF7.2, found in Xenopus laevis (African clawed frog).